Here is a 154-residue protein sequence, read N- to C-terminus: Protein MGF 300-2R (154 aa).

This sequence belongs to the asfivirus MGF 300 family.

In terms of biological role, plays a role in virus cell tropism, and may be required for efficient virus replication in macrophages. The protein is Protein MGF 300-2R of Ornithodoros (relapsing fever ticks).